A 182-amino-acid chain; its full sequence is Protein LURP-one-related 7 (182 aa).

This sequence belongs to the LOR family.

Functionally, might be related to the phospholipid scramblase and tubby-like superfamily of membrane tethered transcription factors. In Arabidopsis thaliana (Mouse-ear cress), this protein is Protein LURP-one-related 7.